Consider the following 139-residue polypeptide: Large ribosomal subunit protein uL16 (139 aa).

The span at 1–20 (MLIPKRTKYRKQHRPVRRGM) shows a compositional bias: basic residues. The disordered stretch occupies residues 1-21 (MLIPKRTKYRKQHRPVRRGMS).

This sequence belongs to the universal ribosomal protein uL16 family. In terms of assembly, part of the 50S ribosomal subunit.

In terms of biological role, binds 23S rRNA and is also seen to make contacts with the A and possibly P site tRNAs. This is Large ribosomal subunit protein uL16 from Bifidobacterium adolescentis (strain ATCC 15703 / DSM 20083 / NCTC 11814 / E194a).